We begin with the raw amino-acid sequence, 345 residues long: D-erythrose-4-phosphate dehydrogenase (345 aa).

Arginine 11 to isoleucine 12 contacts NAD(+). Substrate is bound by residues serine 158 to threonine 160, arginine 204, threonine 217 to lysine 218, and arginine 240. Residue cysteine 159 is the Nucleophile of the active site. Asparagine 322 contacts NAD(+).

Belongs to the glyceraldehyde-3-phosphate dehydrogenase family. Epd subfamily. As to quaternary structure, homotetramer.

The protein resides in the cytoplasm. It catalyses the reaction D-erythrose 4-phosphate + NAD(+) + H2O = 4-phospho-D-erythronate + NADH + 2 H(+). It participates in cofactor biosynthesis; pyridoxine 5'-phosphate biosynthesis; pyridoxine 5'-phosphate from D-erythrose 4-phosphate: step 1/5. Its function is as follows. Catalyzes the NAD-dependent conversion of D-erythrose 4-phosphate to 4-phosphoerythronate. This chain is D-erythrose-4-phosphate dehydrogenase, found in Vibrio campbellii (strain ATCC BAA-1116).